The following is a 72-amino-acid chain: UPF0352 protein NTHI1007 (72 aa).

This sequence belongs to the UPF0352 family.

The polypeptide is UPF0352 protein NTHI1007 (Haemophilus influenzae (strain 86-028NP)).